We begin with the raw amino-acid sequence, 362 residues long: Vignain (362 aa).

The N-terminal stretch at M1–A20 is a signal peptide. A propeptide spans N21–S131 (activation peptide). Intrachain disulfides connect C149–C191, C183–C224, and C282–C334. Residue C152 is part of the active site. Catalysis depends on residues H288 and N309. N-linked (GlcNAc...) asparagine glycans are attached at residues N326 and N346. The short motif at K359 to L362 is the Prevents secretion from ER element.

Belongs to the peptidase C1 family. In terms of assembly, monomer.

Its subcellular location is the endoplasmic reticulum lumen. Functionally, thought to be involved in the hydrolysis of stored seed proteins. The protein is Vignain of Phaseolus vulgaris (Kidney bean).